A 265-amino-acid chain; its full sequence is Histidine racemase (265 aa).

Cys-67 acts as the Proton acceptor in catalysis. Cys-209 (proton donor) is an active-site residue.

The protein belongs to the histidine racemase family. As to quaternary structure, homodimer.

The catalysed reaction is L-histidine = D-histidine. Its activity is regulated as follows. Activity is not affected by buffer composition (PO(4) or Tris), ions (SO(4)(2-), Mg(2+) and EDTA) or the PLP inhibitor hydroxylamine. However, the activity is hindered by iodoacetamide and Hg(2+), which are known inhibitors of enzymes with catalytic thiols. In terms of biological role, cofactor-independent isomerase that catalyzes the reversible conversion of L-histidine to D-histidine. Shows weak activity with L,L-lanthionine. The catalytic turnover is 10'000-fold faster with L-histidine than with L,L-lanthionine. May play a role in growth of F.nucleatum. In Fusobacterium nucleatum subsp. nucleatum (strain ATCC 25586 / DSM 15643 / BCRC 10681 / CIP 101130 / JCM 8532 / KCTC 2640 / LMG 13131 / VPI 4355), this protein is Histidine racemase.